A 403-amino-acid polypeptide reads, in one-letter code: Chaperone protein DnaJ (403 aa).

The J domain maps to 4-69; sequence DYYEILGVAR…DKRRRYDQFG (66 aa). Residues 159–240 form a CR-type zinc finger; the sequence is GVEKTIKIKK…CYGEGIKQGE (82 aa). Residues Cys-172, Cys-175, Cys-188, Cys-191, Cys-214, Cys-217, Cys-228, and Cys-231 each coordinate Zn(2+). CXXCXGXG motif repeat units follow at residues 172 to 179, 188 to 195, 214 to 221, and 228 to 235; these read CRECNGTG, CPTCHGSG, CPTCGGEG, and CPSCYGEG.

This sequence belongs to the DnaJ family. In terms of assembly, homodimer. Zn(2+) serves as cofactor.

Its subcellular location is the cytoplasm. In terms of biological role, participates actively in the response to hyperosmotic and heat shock by preventing the aggregation of stress-denatured proteins and by disaggregating proteins, also in an autonomous, DnaK-independent fashion. Unfolded proteins bind initially to DnaJ; upon interaction with the DnaJ-bound protein, DnaK hydrolyzes its bound ATP, resulting in the formation of a stable complex. GrpE releases ADP from DnaK; ATP binding to DnaK triggers the release of the substrate protein, thus completing the reaction cycle. Several rounds of ATP-dependent interactions between DnaJ, DnaK and GrpE are required for fully efficient folding. Also involved, together with DnaK and GrpE, in the DNA replication of plasmids through activation of initiation proteins. This chain is Chaperone protein DnaJ, found in Chlorobaculum tepidum (strain ATCC 49652 / DSM 12025 / NBRC 103806 / TLS) (Chlorobium tepidum).